The primary structure comprises 554 residues: Calcium/calmodulin-dependent protein kinase type II delta 2 chain (554 aa).

The Protein kinase domain maps to 13–271 (YQLFEELGKG…AAEAPKHPWI (259 aa)). ATP-binding positions include 19–27 (LGKGAFSVV) and K42. The Proton acceptor role is filled by D135. At T286 the chain carries Phosphothreonine. Phosphoserine occurs at positions 314 and 318. Disordered stretches follow at residues 324–375 (PDGV…TIED) and 392–413 (WQPS…SSVQ). Positions 330-340 (NNKTNLASSPK) are enriched in polar residues. At T372 the chain carries Phosphothreonine.

This sequence belongs to the protein kinase superfamily. CAMK Ser/Thr protein kinase family. CaMK subfamily. As to quaternary structure, CAMK2 is composed of four different chains: alpha, beta, gamma, and delta. The different isoforms assemble into homo- or heteromultimeric holoenzymes composed of 8 to 12 subunits. In terms of tissue distribution, first detected at 18 hpf. At 24 hpf, expressed in discrete anterior locations and along either side of the midline. At 48 hpf, expression is predominantly in the forebrain, and then accumulates in the forebrain, hindbrain, and retinal epithelium at 72 hpf.

The catalysed reaction is L-seryl-[protein] + ATP = O-phospho-L-seryl-[protein] + ADP + H(+). The enzyme catalyses L-threonyl-[protein] + ATP = O-phospho-L-threonyl-[protein] + ADP + H(+). With respect to regulation, autophosphorylation of CAMK2 plays an important role in the regulation of the kinase activity. CaM-kinase II (CAMK2) is a prominent kinase in the central nervous system. The chain is Calcium/calmodulin-dependent protein kinase type II delta 2 chain (camk2d2) from Danio rerio (Zebrafish).